The primary structure comprises 1021 residues: Collagenase ColH (1021 aa).

Positions 1-30 are cleaved as a signal peptide; the sequence is MKRKCLSKRLMLAITMATIFTVNSTLPIYA. Residues 31–40 constitute a propeptide that is removed on maturation; that stretch reads AVDKNNATAA. The interval 41-320 is activator domain; it reads VQNESKRYTV…SADQIKRHYD (280 aa). The tract at residues 41 to 717 is S1 metalloprotease domain; the sequence is VQNESKRYTV…TYDVVFHGYL (677 aa). The segment at 330-601 is catalytic subdomain; it reads PLDKFKKEGK…MQERIDNYEN (272 aa). A Zn(2+)-binding site is contributed by D421. Residue E430 participates in Ca(2+) binding. Residue H455 coordinates Zn(2+). E456 is an active-site residue. H459 contributes to the Zn(2+) binding site. 3 residues coordinate Ca(2+): G463, V467, and G469. E487 is a binding site for Zn(2+). Residues 609-721 form a helper subdomain region; sequence DDYLVRHAYK…VFHGYLPNEG (113 aa). The S2a domain stretch occupies residues 718–810; sequence PNEGDSKNSL…VSTTTAEIKD (93 aa). N725, S726, D753, D755, D794, N814, K815, D842, D844, D884, E908, E910, N912, N913, T931, D937, Q938, and D939 together coordinate Ca(2+). Residues 727 to 808 form the PKD 1 domain; it reads LPYGKINGTY…SSVSTTTAEI (82 aa). Residues 811-904 form an S2b domain region; sequence LSENKLPVIY…KIKITDPVYP (94 aa). The region spanning 816 to 905 is the PKD 2 domain; sequence LPVIYMHVPK…IKITDPVYPI (90 aa). The tract at residues 903–922 is disordered; it reads YPIGTEKEPNNSKETASGPI. The interval 905–1021 is S3 collagen-binding domain; it reads IGTEKEPNNS…RINIEGSVGR (117 aa). Residues 1002–1004 are collagen-binding; the sequence is YMF.

The protein belongs to the peptidase M9B family. Collagenase subfamily. Ca(2+) serves as cofactor. Requires Zn(2+) as cofactor. Upon purification gives rise to 98 kDa, 105 kDa and 116 kDa (full-length) proteins, all of which have the same N-terminus.

It localises to the secreted. It catalyses the reaction Digestion of native collagen in the triple helical region at Xaa-|-Gly bonds. With synthetic peptides, a preference is shown for Gly at P3 and P1', Pro and Ala at P2 and P2', and hydroxyproline, Ala or Arg at P3'.. Inhibited by EDTA. Inhibited by 1-10-phenanthroline. Inhibited by broad-spectrum zinc metalloprotease inhibitor batimastat. N-aryl mercaptoacetamide-based inhibitors have been isolated that act on clostridial collagenases with submicromolar affinity while having negligibile activity on human collagenases. Its function is as follows. Clostridial collagenases are among the most efficient degraders of eukaryotic collagen known; saprophytes use collagen as a carbon source while pathogens additionally digest collagen to aid in host colonization. Has both tripeptidylcarboxypeptidase on Gly-X-Y and endopeptidase activities; the endopeptidase cuts within the triple helix region of collagen while tripeptidylcarboxypeptidase successively digests the exposed ends, thus clostridial collagenases can digest large sections of collagen. The full-length protein has collagenase activity, while both the 116 kDa and 98 kDa forms act on gelatin. In vitro digestion of soluble calf skin collagen fibrils requires both ColG and ColH; ColG forms missing the second collagen-binding domain is also synergistic with ColH, although their overall efficiency is decreased. Digestion of collagen requires Ca(2+) and is inhibited by EDTA. The activator domain (residues 119-388) and catalytic subdomain (330-601) open and close around substrate allowing digestion when the protein is closed. This is Collagenase ColH from Hathewaya histolytica (Clostridium histolyticum).